Consider the following 181-residue polypeptide: Peptidyl-tRNA hydrolase (181 aa).

Tyr-14 contributes to the tRNA binding site. Catalysis depends on His-19, which acts as the Proton acceptor. Positions 60, 62, and 108 each coordinate tRNA.

Belongs to the PTH family. As to quaternary structure, monomer.

It localises to the cytoplasm. The enzyme catalyses an N-acyl-L-alpha-aminoacyl-tRNA + H2O = an N-acyl-L-amino acid + a tRNA + H(+). In terms of biological role, hydrolyzes ribosome-free peptidyl-tRNAs (with 1 or more amino acids incorporated), which drop off the ribosome during protein synthesis, or as a result of ribosome stalling. Functionally, catalyzes the release of premature peptidyl moieties from peptidyl-tRNA molecules trapped in stalled 50S ribosomal subunits, and thus maintains levels of free tRNAs and 50S ribosomes. The protein is Peptidyl-tRNA hydrolase of Metamycoplasma arthritidis (strain 158L3-1) (Mycoplasma arthritidis).